The following is a 241-amino-acid chain: 1-(5-phosphoribosyl)-5-[(5-phosphoribosylamino)methylideneamino] imidazole-4-carboxamide isomerase (241 aa).

Asp10 acts as the Proton acceptor in catalysis. The active-site Proton donor is Asp131.

It belongs to the HisA/HisF family.

It is found in the cytoplasm. The enzyme catalyses 1-(5-phospho-beta-D-ribosyl)-5-[(5-phospho-beta-D-ribosylamino)methylideneamino]imidazole-4-carboxamide = 5-[(5-phospho-1-deoxy-D-ribulos-1-ylimino)methylamino]-1-(5-phospho-beta-D-ribosyl)imidazole-4-carboxamide. The protein operates within amino-acid biosynthesis; L-histidine biosynthesis; L-histidine from 5-phospho-alpha-D-ribose 1-diphosphate: step 4/9. The polypeptide is 1-(5-phosphoribosyl)-5-[(5-phosphoribosylamino)methylideneamino] imidazole-4-carboxamide isomerase (Bifidobacterium longum (strain NCC 2705)).